The primary structure comprises 92 residues: Small ribosomal subunit protein uS19 (92 aa).

This sequence belongs to the universal ribosomal protein uS19 family.

Its function is as follows. Protein S19 forms a complex with S13 that binds strongly to the 16S ribosomal RNA. The polypeptide is Small ribosomal subunit protein uS19 (Oceanobacillus iheyensis (strain DSM 14371 / CIP 107618 / JCM 11309 / KCTC 3954 / HTE831)).